The chain runs to 214 residues: Phosphatidyl-N-methylethanolamine N-methyltransferase (214 aa).

Residues 1-19 (MPLVALGVADLFNFVDYSK) lie on the Lumenal side of the membrane. The segment at residues 20–40 (TSLAISAAAIAFNPTFWNIVA) is an intramembrane region (helical). Over 41–52 (RREYRTKFLTRA) the chain is Lumenal. Residues 53 to 74 (FGGNAQVACYFLAVTIFGLGLV) traverse the membrane as a helical segment. Residues 75 to 101 (RDFLYERALRDQPSHPLLEGTYVKYAA) lie on the Cytoplasmic side of the membrane. The chain crosses the membrane as a helical span at residues 102–122 (YALLALGNLLVITSTMRLGIT). S-adenosyl-L-methionine is bound at residue 106–108 (ALG). Residues 123–165 (GTFLGDYFGILMDGIVTGFPFNVTSAPMYYGSTMSFLGTALLY) lie on the Lumenal side of the membrane. Residues 166–186 (GKPAGLLLTAWVLFVYIIAIQ) form a helical membrane-spanning segment. At 187–214 (FENPFTAEIYAKRDRERAKAAGTSKKEL) the chain is on the cytoplasmic side. 188-189 (EN) serves as a coordination point for S-adenosyl-L-methionine.

This sequence belongs to the class VI-like SAM-binding methyltransferase superfamily. PEMT/PEM2 methyltransferase family.

The protein resides in the endoplasmic reticulum membrane. Its subcellular location is the mitochondrion membrane. The enzyme catalyses a 1,2-diacyl-sn-glycero-3-phospho-N-methylethanolamine + S-adenosyl-L-methionine = a 1,2-diacyl-sn-glycero-3-phospho-N,N-dimethylethanolamine + S-adenosyl-L-homocysteine + H(+). It catalyses the reaction a 1,2-diacyl-sn-glycero-3-phospho-N,N-dimethylethanolamine + S-adenosyl-L-methionine = a 1,2-diacyl-sn-glycero-3-phosphocholine + S-adenosyl-L-homocysteine + H(+). It participates in phospholipid metabolism; phosphatidylcholine biosynthesis. Catalyzes the second two steps of the methylation pathway of phosphatidylcholine biosynthesis, the SAM-dependent methylation of phosphatidylmonomethylethanolamine (PMME) to phosphatidyldimethylethanolamine (PDME) and of PDME to phosphatidylcholine (PC). The protein is Phosphatidyl-N-methylethanolamine N-methyltransferase of Neurospora crassa (strain ATCC 24698 / 74-OR23-1A / CBS 708.71 / DSM 1257 / FGSC 987).